Here is a 238-residue protein sequence, read N- to C-terminus: Ribosome-recycling factor, mitochondrial (238 aa).

Belongs to the RRF family.

The protein localises to the mitochondrion. In terms of biological role, responsible for the release of ribosomes from messenger RNA at the termination of protein biosynthesis. May increase the efficiency of translation by recycling ribosomes from one round of translation to another. This Caenorhabditis elegans protein is Ribosome-recycling factor, mitochondrial.